Here is a 205-residue protein sequence, read N- to C-terminus: Probable molybdenum cofactor guanylyltransferase (205 aa).

Residues Leu9–Gly11, Lys21, Asp66, and Asp95 each bind GTP. Asp95 provides a ligand contact to Mg(2+).

This sequence belongs to the MobA family. Requires Mg(2+) as cofactor.

The protein resides in the cytoplasm. The enzyme catalyses Mo-molybdopterin + GTP + H(+) = Mo-molybdopterin guanine dinucleotide + diphosphate. Its function is as follows. Transfers a GMP moiety from GTP to Mo-molybdopterin (Mo-MPT) cofactor (Moco or molybdenum cofactor) to form Mo-molybdopterin guanine dinucleotide (Mo-MGD) cofactor. The chain is Probable molybdenum cofactor guanylyltransferase from Pelotomaculum thermopropionicum (strain DSM 13744 / JCM 10971 / SI).